The following is a 228-amino-acid chain: LexA repressor (228 aa).

The segment at residues 28–48 is a DNA-binding region (H-T-H motif); it reads IREIGEALDIRSTNGVNDHLK. Residues Ser-146 and Lys-183 each act as for autocatalytic cleavage activity in the active site.

The protein belongs to the peptidase S24 family. In terms of assembly, homodimer.

The enzyme catalyses Hydrolysis of Ala-|-Gly bond in repressor LexA.. Functionally, represses a number of genes involved in the response to DNA damage (SOS response), including recA and lexA. In the presence of single-stranded DNA, RecA interacts with LexA causing an autocatalytic cleavage which disrupts the DNA-binding part of LexA, leading to derepression of the SOS regulon and eventually DNA repair. The chain is LexA repressor from Anaeromyxobacter dehalogenans (strain 2CP-1 / ATCC BAA-258).